We begin with the raw amino-acid sequence, 194 residues long: Holliday junction branch migration complex subunit RuvA (194 aa).

A domain I region spans residues 1–64 (MIGRLRGILA…EDSVSLYGFL (64 aa)). Residues 65 to 140 (REGERRLFRD…RAADFSSGAP (76 aa)) are domain II. The segment at 140 to 144 (PITGQ) is flexible linker. Positions 145 to 194 (LGPDAVSEATVALQQLGYKPAEAARMAREAGAEGDEVATVIRKALQAALR) are domain III.

It belongs to the RuvA family. As to quaternary structure, homotetramer. Forms an RuvA(8)-RuvB(12)-Holliday junction (HJ) complex. HJ DNA is sandwiched between 2 RuvA tetramers; dsDNA enters through RuvA and exits via RuvB. An RuvB hexamer assembles on each DNA strand where it exits the tetramer. Each RuvB hexamer is contacted by two RuvA subunits (via domain III) on 2 adjacent RuvB subunits; this complex drives branch migration. In the full resolvosome a probable DNA-RuvA(4)-RuvB(12)-RuvC(2) complex forms which resolves the HJ.

It is found in the cytoplasm. Functionally, the RuvA-RuvB-RuvC complex processes Holliday junction (HJ) DNA during genetic recombination and DNA repair, while the RuvA-RuvB complex plays an important role in the rescue of blocked DNA replication forks via replication fork reversal (RFR). RuvA specifically binds to HJ cruciform DNA, conferring on it an open structure. The RuvB hexamer acts as an ATP-dependent pump, pulling dsDNA into and through the RuvAB complex. HJ branch migration allows RuvC to scan DNA until it finds its consensus sequence, where it cleaves and resolves the cruciform DNA. This is Holliday junction branch migration complex subunit RuvA from Xanthomonas campestris pv. campestris (strain 8004).